A 211-amino-acid chain; its full sequence is Uracil phosphoribosyltransferase (211 aa).

5-phospho-alpha-D-ribose 1-diphosphate is bound by residues R78, R103, and 130–138 (DPMLATGAT). Residues I195 and 200–202 (GDA) each bind uracil. D201 is a binding site for 5-phospho-alpha-D-ribose 1-diphosphate.

Belongs to the UPRTase family. It depends on Mg(2+) as a cofactor.

The enzyme catalyses UMP + diphosphate = 5-phospho-alpha-D-ribose 1-diphosphate + uracil. The protein operates within pyrimidine metabolism; UMP biosynthesis via salvage pathway; UMP from uracil: step 1/1. Its activity is regulated as follows. Allosterically activated by GTP. Catalyzes the conversion of uracil and 5-phospho-alpha-D-ribose 1-diphosphate (PRPP) to UMP and diphosphate. This chain is Uracil phosphoribosyltransferase, found in Renibacterium salmoninarum (strain ATCC 33209 / DSM 20767 / JCM 11484 / NBRC 15589 / NCIMB 2235).